Here is a 241-residue protein sequence, read N- to C-terminus: Peptidoglycan endopeptidase RipB (241 aa).

A signal peptide spans methionine 1–alanine 31. Residues arginine 109–tyrosine 241 form the NlpC/P60 domain. Catalysis depends on cysteine 152, which acts as the Nucleophile. Catalysis depends on histidine 201, which acts as the Proton acceptor. Residue glutamate 213 is part of the active site.

The protein belongs to the peptidase C40 family. In terms of assembly, monomer.

In terms of biological role, peptidoglycan endopeptidase that cleaves the bond between D-glutamate and meso-diaminopimelate. Binds high-molecular weight peptidoglycan, but does not degrade it. Required for normal separation of daughter cells after cell division and cell wall integrity. Required for host cell invasion. This chain is Peptidoglycan endopeptidase RipB (ripB), found in Mycobacterium tuberculosis (strain CDC 1551 / Oshkosh).